A 287-amino-acid polypeptide reads, in one-letter code: Putative daunorubicin C-13 ketoreductase DnrU (287 aa).

24-30 (GATSGIG) is a binding site for NADP(+). Serine 149 is a binding site for substrate. The active-site Proton acceptor is the tyrosine 175.

This sequence belongs to the short-chain dehydrogenases/reductases (SDR) family.

Its function is as follows. Could reduce the 13-carbonyl of daunorubicin to produce (13S)-13-dihydrodaunorubicin. Could also be able to reduce the 13-carbonyl of doxorubicin. The protein is Putative daunorubicin C-13 ketoreductase DnrU of Streptomyces sp. (strain C5).